A 306-amino-acid polypeptide reads, in one-letter code: Acetyl-coenzyme A carboxylase carboxyl transferase subunit beta (306 aa).

A CoA carboxyltransferase N-terminal domain is found at 25 to 294 (LWIKDPTSGE…APEPSHAFSK (270 aa)). Residues 287–306 (EPSHAFSKDSQTQISKTKAA) are disordered. Residues 294–306 (KDSQTQISKTKAA) show a composition bias toward polar residues.

Belongs to the AccD/PCCB family. In terms of assembly, acetyl-CoA carboxylase is a heterohexamer composed of biotin carboxyl carrier protein (AccB), biotin carboxylase (AccC) and two subunits each of ACCase subunit alpha (AccA) and ACCase subunit beta (AccD).

It is found in the cytoplasm. It carries out the reaction N(6)-carboxybiotinyl-L-lysyl-[protein] + acetyl-CoA = N(6)-biotinyl-L-lysyl-[protein] + malonyl-CoA. Its pathway is lipid metabolism; malonyl-CoA biosynthesis; malonyl-CoA from acetyl-CoA: step 1/1. Component of the acetyl coenzyme A carboxylase (ACC) complex. Biotin carboxylase (BC) catalyzes the carboxylation of biotin on its carrier protein (BCCP) and then the CO(2) group is transferred by the transcarboxylase to acetyl-CoA to form malonyl-CoA. The chain is Acetyl-coenzyme A carboxylase carboxyl transferase subunit beta from Bartonella bacilliformis (strain ATCC 35685 / KC583 / Herrer 020/F12,63).